Here is a 330-residue protein sequence, read N- to C-terminus: Phosphate acyltransferase (330 aa).

Belongs to the PlsX family. In terms of assembly, homodimer. Probably interacts with PlsY.

Its subcellular location is the cytoplasm. It catalyses the reaction a fatty acyl-[ACP] + phosphate = an acyl phosphate + holo-[ACP]. Its pathway is lipid metabolism; phospholipid metabolism. Its function is as follows. Catalyzes the reversible formation of acyl-phosphate (acyl-PO(4)) from acyl-[acyl-carrier-protein] (acyl-ACP). This enzyme utilizes acyl-ACP as fatty acyl donor, but not acyl-CoA. The chain is Phosphate acyltransferase from Lactobacillus delbrueckii subsp. bulgaricus (strain ATCC 11842 / DSM 20081 / BCRC 10696 / JCM 1002 / NBRC 13953 / NCIMB 11778 / NCTC 12712 / WDCM 00102 / Lb 14).